Here is a 277-residue protein sequence, read N- to C-terminus: NADPH-dependent 7-cyano-7-deazaguanine reductase (277 aa).

A substrate-binding site is contributed by 83-85; it reads VES. Residue 85–86 coordinates NADPH; that stretch reads SK. Catalysis depends on cysteine 184, which acts as the Thioimide intermediate. Residue aspartate 191 is the Proton donor of the active site. 223 to 224 lines the substrate pocket; it reads HE. 252–253 contributes to the NADPH binding site; it reads RG.

This sequence belongs to the GTP cyclohydrolase I family. QueF type 2 subfamily. Homodimer.

Its subcellular location is the cytoplasm. It catalyses the reaction 7-aminomethyl-7-carbaguanine + 2 NADP(+) = 7-cyano-7-deazaguanine + 2 NADPH + 3 H(+). Its pathway is tRNA modification; tRNA-queuosine biosynthesis. In terms of biological role, catalyzes the NADPH-dependent reduction of 7-cyano-7-deazaguanine (preQ0) to 7-aminomethyl-7-deazaguanine (preQ1). In Ralstonia nicotianae (strain ATCC BAA-1114 / GMI1000) (Ralstonia solanacearum), this protein is NADPH-dependent 7-cyano-7-deazaguanine reductase.